Consider the following 252-residue polypeptide: Imidazole glycerol phosphate synthase subunit HisF (252 aa).

Active-site residues include Asp-11 and Asp-130.

It belongs to the HisA/HisF family. In terms of assembly, heterodimer of HisH and HisF.

The protein localises to the cytoplasm. It catalyses the reaction 5-[(5-phospho-1-deoxy-D-ribulos-1-ylimino)methylamino]-1-(5-phospho-beta-D-ribosyl)imidazole-4-carboxamide + L-glutamine = D-erythro-1-(imidazol-4-yl)glycerol 3-phosphate + 5-amino-1-(5-phospho-beta-D-ribosyl)imidazole-4-carboxamide + L-glutamate + H(+). The protein operates within amino-acid biosynthesis; L-histidine biosynthesis; L-histidine from 5-phospho-alpha-D-ribose 1-diphosphate: step 5/9. Functionally, IGPS catalyzes the conversion of PRFAR and glutamine to IGP, AICAR and glutamate. The HisF subunit catalyzes the cyclization activity that produces IGP and AICAR from PRFAR using the ammonia provided by the HisH subunit. This is Imidazole glycerol phosphate synthase subunit HisF from Bacillus cereus (strain AH187).